Reading from the N-terminus, the 483-residue chain is Cobyric acid synthase (483 aa).

Residues 251–438 form the GATase cobBQ-type domain; the sequence is ALIVAVPMLP…LHGIFSADRF (188 aa). Cys-333 (nucleophile) is an active-site residue. Residue His-430 is part of the active site.

This sequence belongs to the CobB/CobQ family. CobQ subfamily.

It functions in the pathway cofactor biosynthesis; adenosylcobalamin biosynthesis. Functionally, catalyzes amidations at positions B, D, E, and G on adenosylcobyrinic A,C-diamide. NH(2) groups are provided by glutamine, and one molecule of ATP is hydrogenolyzed for each amidation. The sequence is that of Cobyric acid synthase from Brucella abortus (strain S19).